A 155-amino-acid chain; its full sequence is Putative pre-16S rRNA nuclease (155 aa).

Positions 136–155 (DAERATSRPPGHPVEPRIGP) are disordered.

It belongs to the YqgF nuclease family.

It localises to the cytoplasm. Could be a nuclease involved in processing of the 5'-end of pre-16S rRNA. This chain is Putative pre-16S rRNA nuclease, found in Leifsonia xyli subsp. xyli (strain CTCB07).